Here is a 324-residue protein sequence, read N- to C-terminus: Clavaminate synthase 1 (324 aa).

Residues His-144, Glu-146, and His-279 each contribute to the Fe cation site. A 2-oxoglutarate-binding site is contributed by Arg-293.

This sequence belongs to the clavaminate synthase family. The cofactor is Fe(2+).

The catalysed reaction is deoxyamidinoproclavaminate + 2-oxoglutarate + O2 = amidinoproclavaminate + succinate + CO2. It catalyses the reaction proclavaminate + 2-oxoglutarate + O2 = dihydroclavaminate + succinate + CO2 + H2O. The enzyme catalyses dihydroclavaminate + 2-oxoglutarate + O2 = clavaminate + succinate + CO2 + H2O. Its pathway is antibiotic biosynthesis; clavulanate biosynthesis; clavulanate from D-glyceraldehyde 3-phosphate and L-arginine: step 3/8. The protein operates within antibiotic biosynthesis; clavulanate biosynthesis; clavulanate from D-glyceraldehyde 3-phosphate and L-arginine: step 5/8. It participates in antibiotic biosynthesis; clavulanate biosynthesis; clavulanate from D-glyceraldehyde 3-phosphate and L-arginine: step 6/8. This Streptomyces clavuligerus protein is Clavaminate synthase 1 (cs1).